Here is a 327-residue protein sequence, read N- to C-terminus: Melanoma-associated antigen B18 (327 aa).

Residues 1–19 are compositionally biased toward basic residues; that stretch reads MPRGQKSKLRAREKRRQAR. The segment at 1–85 is disordered; the sequence is MPRGQKSKLR…SSDDSEDTED (85 aa). A compositionally biased stretch (polar residues) spans 46–70; it reads MPTSPNMPMGEQSTFSHSYTSTSDQ. One can recognise an MAGE domain in the interval 91–289; that stretch reads INHKVVLLVQ…DSFPTLYEAA (199 aa).

As to quaternary structure, interacts with LNX1. Expressed in testis, stomach, large intestine, small intestine, spleen, lymph node, bone marrow lymphocytes and blood T-lymphocytes. Not detected in brain, heart, lung, liver or kidney (at protein level).

The protein localises to the cytoplasm. Functionally, may enhance ubiquitin ligase activity of RING-type zinc finger-containing E3 ubiquitin-protein ligases. Proposed to act through recruitment and/or stabilization of the Ubl-conjugating enzyme (E2) at the E3:substrate complex. In Mus musculus (Mouse), this protein is Melanoma-associated antigen B18.